The sequence spans 301 residues: Ornithine carbamoyltransferase (301 aa).

Carbamoyl phosphate-binding positions include arginine 100 and 127–130 (HPCQ). Residues asparagine 158, aspartate 221, and 225–226 (SM) contribute to the L-ornithine site. Carbamoyl phosphate is bound by residues cysteine 260 and arginine 288.

The protein belongs to the aspartate/ornithine carbamoyltransferase superfamily. OTCase family.

The protein resides in the cytoplasm. It carries out the reaction carbamoyl phosphate + L-ornithine = L-citrulline + phosphate + H(+). It functions in the pathway amino-acid biosynthesis; L-arginine biosynthesis; L-arginine from L-ornithine and carbamoyl phosphate: step 1/3. In terms of biological role, reversibly catalyzes the transfer of the carbamoyl group from carbamoyl phosphate (CP) to the N(epsilon) atom of ornithine (ORN) to produce L-citrulline. The protein is Ornithine carbamoyltransferase (argF) of Vibrio sp. (strain 2693).